A 49-amino-acid chain; its full sequence is Small ribosomal subunit protein uS19c (49 aa).

Belongs to the universal ribosomal protein uS19 family.

It is found in the plastid. The protein localises to the chloroplast. Protein S19 forms a complex with S13 that binds strongly to the 16S ribosomal RNA. This chain is Small ribosomal subunit protein uS19c (rps19), found in Sinapis alba (White mustard).